The sequence spans 170 residues: Interferon gamma (170 aa).

Positions 1–20 (MNSRLCIMALLLCFSQALLG) are cleaved as a signal peptide. N36 and N103 each carry an N-linked (GlcNAc...) asparagine glycan.

Belongs to the type II (or gamma) interferon family. Homodimer. Interacts with IFNGR1 (via extracellular domain); this interaction promotes IFNGR1 dimerization. Released primarily from activated T lymphocytes.

It localises to the secreted. Type II interferon produced by immune cells such as T-cells and NK cells that plays crucial roles in antimicrobial, antiviral, and antitumor responses by activating effector immune cells and enhancing antigen presentation. Primarily signals through the JAK-STAT pathway after interaction with its receptor IFNGR1 to affect gene regulation. Upon IFNG binding, IFNGR1 intracellular domain opens out to allow association of downstream signaling components JAK2, JAK1 and STAT1, leading to STAT1 activation, nuclear translocation and transcription of IFNG-regulated genes. Many of the induced genes are transcription factors such as IRF1 that are able to further drive regulation of a next wave of transcription. Plays a role in class I antigen presentation pathway by inducing a replacement of catalytic proteasome subunits with immunoproteasome subunits. In turn, increases the quantity, quality, and repertoire of peptides for class I MHC loading. Increases the efficiency of peptide generation also by inducing the expression of activator PA28 that associates with the proteasome and alters its proteolytic cleavage preference. Up-regulates as well MHC II complexes on the cell surface by promoting expression of several key molecules such as cathepsins B/CTSB, H/CTSH, and L/CTSL. Participates in the regulation of hematopoietic stem cells during development and under homeostatic conditions by affecting their development, quiescence, and differentiation. The protein is Interferon gamma (IFNG) of Sigmodon hispidus (Hispid cotton rat).